Consider the following 119-residue polypeptide: Protein TusC (119 aa).

This sequence belongs to the DsrF/TusC family. In terms of assembly, heterohexamer, formed by a dimer of trimers. The hexameric TusBCD complex contains 2 copies each of TusB, TusC and TusD. The TusBCD complex interacts with TusE.

The protein resides in the cytoplasm. In terms of biological role, part of a sulfur-relay system required for 2-thiolation of 5-methylaminomethyl-2-thiouridine (mnm(5)s(2)U) at tRNA wobble positions. The protein is Protein TusC of Klebsiella pneumoniae (strain 342).